The chain runs to 401 residues: Probable thioesterase FGSG_00047 (401 aa).

The segment at 379-401 (AREMDQRKRQKDFTHTTIHDKNS) is disordered.

It belongs to the AMT4 thioesterase family.

It participates in mycotoxin biosynthesis. Its function is as follows. Probable thioesterase; part of the gene cluster that mediates the biosynthesis of gramillins A and B, bicyclic lipopeptides that induce cell death in maize leaves but not in wheat leaves. The nonribosomal peptide synthetase GRA1 incorporates respectively a glutamic adic (Glu), a leucine (Leu), a serine (Ser), a hydroxyglutamine (HOGln), a 2-amino decanoic acid, and 2 cysteins (CysB and CysA). The biosynthesis of 2-amino decanoic acid incorporated in gramillins could be initiated by a fatty acid synthase composed of the alpha and beta subunits FGSG_00036 and FGSG_11656. The cytochrome P450 monooxygenase FGSG_15680 could hydroxylate the fatty acid chain. Subsequent oxidation to the ketone by the oxidoreductase FGSG_00048 and transamination by aminotransferase FGSG_00049 could form 2-amino-decanoic acid. On the other hand, FGSG_15680 could also be responsible for the HO-modified glutamine at the gamma-position. Whether hydroxylation occurs on the fully assembled product or on the Gln residue prior to assembly into the gramillins requires further proof. The thioredoxin FGSG_00043 could also be required for the disulfide-bond formation between CysA and CysB. The specific involvement of the remaining proteins from the cluster is more difficult to discern, but could have broader regulatory (FGSG_00040 and FGSG_11657) or enzymatic functions (FGSG_00044 and FGSG_00045). The final C-domain of GRA1 does not possess the expected sequence of a termination CT domain, often implicated in macrocyclization and release of a cyclopeptidein fungal NRPs; and the thioesterase FGSG_00047 may act in concert with the terminal C-domain of GRA1 to catalyze the formation of the macrocyclic anhydride and release of the products. The protein is Probable thioesterase FGSG_00047 of Gibberella zeae (strain ATCC MYA-4620 / CBS 123657 / FGSC 9075 / NRRL 31084 / PH-1) (Wheat head blight fungus).